Consider the following 151-residue polypeptide: UPF0208 membrane protein YfbV (151 aa).

The Cytoplasmic segment spans residues 1–45 (MSTPDNRSVNFFSLFCRGQHYSKTWPLEKRLAPVFVENRVIKMTR). The chain crosses the membrane as a helical span at residues 46–65 (YAIRFMPPIAVFTLCWQIAL). At 66 to 68 (GGQ) the chain is on the periplasmic side. A helical membrane pass occupies residues 69–91 (LGPAVATALFALSLPMQGLWWLG). Residues 92 to 151 (KRSVTPLPPAILNWFYEVRGKLQESGQVLAPVEGKPDYQALADTLKRAFKQLDKTFLDDL) are Cytoplasmic-facing.

Belongs to the UPF0208 family.

Its subcellular location is the cell inner membrane. This chain is UPF0208 membrane protein YfbV (yfbV), found in Escherichia coli O6:H1 (strain CFT073 / ATCC 700928 / UPEC).